Reading from the N-terminus, the 549-residue chain is Glucose-6-phosphate isomerase (549 aa).

E353 serves as the catalytic Proton donor. Active-site residues include H384 and K513.

Belongs to the GPI family.

The protein resides in the cytoplasm. It carries out the reaction alpha-D-glucose 6-phosphate = beta-D-fructose 6-phosphate. Its pathway is carbohydrate biosynthesis; gluconeogenesis. It participates in carbohydrate degradation; glycolysis; D-glyceraldehyde 3-phosphate and glycerone phosphate from D-glucose: step 2/4. Functionally, catalyzes the reversible isomerization of glucose-6-phosphate to fructose-6-phosphate. This chain is Glucose-6-phosphate isomerase, found in Brucella anthropi (strain ATCC 49188 / DSM 6882 / CCUG 24695 / JCM 21032 / LMG 3331 / NBRC 15819 / NCTC 12168 / Alc 37) (Ochrobactrum anthropi).